We begin with the raw amino-acid sequence, 116 residues long: Large ribosomal subunit protein eL22A (116 aa).

The protein belongs to the eukaryotic ribosomal protein eL22 family.

This Dictyostelium discoideum (Social amoeba) protein is Large ribosomal subunit protein eL22A (rpl22).